Here is a 314-residue protein sequence, read N- to C-terminus: uncharacterized protein (314 aa).

Positions 1–24 are cleaved as a signal peptide; the sequence is MKRRRRWRGWLLFPALCFCLLCEA. Asn28, Asn43, Asn57, Asn77, Asn101, Asn102, Asn109, Asn151, Asn170, Asn217, Asn223, Asn252, Asn255, and Asn268 each carry an N-linked (GlcNAc...) asparagine; by host glycan. Residues 47–114 are compositionally biased toward low complexity; that stretch reads ATTGTTTTSP…TIGTNATSPS (68 aa). The tract at residues 47–116 is disordered; the sequence is ATTGTTTTSP…GTNATSPSPS (70 aa).

It belongs to the HHV-5 UL116 protein family. In terms of assembly, interacts with gH. Interacts with UL148. Highly glycosylated.

The protein localises to the virion. Its subcellular location is the host endoplasmic reticulum. Chaperone protein that cooperates with UL148 to regulate the abundance of gH complexes in virion. First interactor of gH in the host endoplasmic reticulum, regulates the early folding steps of virion assembly. Then, UL148 is recruited and favors the binding of gL. This is an uncharacterized protein from Homo sapiens (Human).